A 572-amino-acid chain; its full sequence is MPLPWISVIWFAYLIVIFVLIVVASVFIHVYQTPRDRSSFVTFICVFSIAALLATVMLLPVDVALVSSTISSALGQREEWATQEEVDKITYSLTIIYYSLYFLDALLCFVGIPFAYFWHEEYDEVAFEAGDQTACKRFWAATKYTLTFIAVVIALVLVGFFAPMMESQPGHDLGYWRGYLIENQGEHAFTFLLGFVTIIGSCLYAFYTPSGLAMLPALFLRKSSSFATQTLGGSTAMELNFNRERQRQLEGRCGGNSALLSAKDRRELDTLVREERTLIRRQRLIEGRQEEDQSWPVTVYSKLKTILRPFRLLGGFCLFLVGLSTWISLLMTVVDKLINSPCKHHCGYVLSRTNFNPISWIFIQSSRAFPTDYIIFALIVFFFFWGSVVGVVAVGIRFLWIRIFQIRKGHTSPQAMLLATAVLTLITLGLNYSIVMMLVPGYATFGPQTFCDLAPTSSEEQSDCSNHRHLVKPCSEKADSTAADKTCTPSVASTILNRVALNFPLFGALLLWAHFLFLAGGGRRRGRGRESVSKHQKKRQSYMRGCPIASREPATSNYERLFKEGFFIFKRR.

Transmembrane regions (helical) follow at residues 8-28, 40-60, 95-115, 145-165, 188-208, 314-334, 374-394, 421-441, and 499-519; these read VIWF…SVFI, FVTF…MLLP, IIYY…IPFA, TLTF…APMM, AFTF…AFYT, GGFC…MTVV, IIFA…VVAV, AVLT…LVPG, and VALN…LFLA. The disordered stretch occupies residues 522–544; sequence GRRRGRGRESVSKHQKKRQSYMR.

The protein belongs to the LIMR family. LMBRD1 subfamily.

It localises to the lysosome membrane. Its function is as follows. Probable lysosomal cobalamin transporter. Required to export cobalamin from lysosomes allowing its conversion to cofactors. This Aspergillus fumigatus (strain ATCC MYA-4609 / CBS 101355 / FGSC A1100 / Af293) (Neosartorya fumigata) protein is Probable lysosomal cobalamin transporter.